Consider the following 279-residue polypeptide: MTKADTIFKENIECILKEGVFSEQARPKYKDGTVANSKYVTGAFSEYDLSKGEFPITTLRPIAIKSAIKEVLWIYQDQSNSLEVLNDKYNVHYWNDWEVGDTGTIGERYGAVVKKHDIINKLLKQLETNPWNRRNIISLWDYQAFEETDGLLPCAFQTMFDVRRVDGEIYLDATLTQRSNDMLVAHHINAMQYVALQMMIAKHFGWKVGKFFYFINNLHIYDNQFEQAQELLRREPSNCQPRLVLNVPDGTNFFDIKAEDFELVDYDPVKPQLKFDLAI.

133–134 is a binding site for dUMP; sequence RR. Catalysis depends on cysteine 154, which acts as the Nucleophile. Residues 178 to 181, asparagine 189, and 219 to 221 contribute to the dUMP site; these read RSND and HIY. Position 181 (aspartate 181) interacts with (6R)-5,10-methylene-5,6,7,8-tetrahydrofolate. Alanine 278 serves as a coordination point for (6R)-5,10-methylene-5,6,7,8-tetrahydrofolate.

The protein belongs to the thymidylate synthase family. Bacterial-type ThyA subfamily. Homodimer.

Its subcellular location is the cytoplasm. The catalysed reaction is dUMP + (6R)-5,10-methylene-5,6,7,8-tetrahydrofolate = 7,8-dihydrofolate + dTMP. It participates in pyrimidine metabolism; dTTP biosynthesis. In terms of biological role, catalyzes the reductive methylation of 2'-deoxyuridine-5'-monophosphate (dUMP) to 2'-deoxythymidine-5'-monophosphate (dTMP) while utilizing 5,10-methylenetetrahydrofolate (mTHF) as the methyl donor and reductant in the reaction, yielding dihydrofolate (DHF) as a by-product. This enzymatic reaction provides an intracellular de novo source of dTMP, an essential precursor for DNA biosynthesis. The chain is Thymidylate synthase from Streptococcus pneumoniae (strain ATCC 700669 / Spain 23F-1).